A 555-amino-acid chain; its full sequence is Putative polyketide hydroxylase (555 aa).

Residues 16–45 (PVLVVGGSLVGLSTSVFLGRLGVRHMLVER) and 303–313 (YRAGRVFLAGD) each bind FAD. The segment at 366–395 (ATTARAAARSAEHSHPGFAPPPGTSGGPQG) is disordered.

The protein belongs to the PheA/TfdB FAD monooxygenase family. It depends on FAD as a cofactor.

Its function is as follows. Involved in developmentally regulated synthesis of a compound biosynthetically related to polyketide antibiotics which is essential for spore color in Streptomyces halstedii. The polypeptide is Putative polyketide hydroxylase (schC) (Streptomyces halstedii).